The sequence spans 599 residues: Nucleoporin p58/p45 (599 aa).

5 repeat units span residues phenylalanine 7–glycine 8, phenylalanine 30–glycine 31, phenylalanine 44–glycine 45, phenylalanine 63–glycine 64, and phenylalanine 68–glycine 69. A 14 X 2 AA repeats of F-G region spans residues phenylalanine 7 to glycine 579. Residues asparagine 213–leucine 247 are disordered. Positions serine 225–asparagine 246 are enriched in basic and acidic residues. Coiled coils occupy residues glutamate 256 to serine 276 and glutamate 314 to threonine 381. Threonine 331 carries the phosphothreonine modification. Tandem repeats lie at residues phenylalanine 488–glycine 489, phenylalanine 492–glycine 493, phenylalanine 513–glycine 514, phenylalanine 519–glycine 520, phenylalanine 529–glycine 530, phenylalanine 531–glycine 532, phenylalanine 545–glycine 546, phenylalanine 568–glycine 569, and phenylalanine 578–glycine 579. A disordered region spans residues glycine 579–arginine 599.

Belongs to the NUP58 family. As to quaternary structure, component of the p62 complex, a complex at least composed of NUP62, NUP54, and NUP58. Interacts with NUTF2. Interacts with SRP1-alpha and Importin p97 proteins when they are together, but not with SRP1-alpha protein alone. O-glycosylated.

The protein resides in the nucleus. It is found in the nuclear pore complex. It localises to the nucleus membrane. Component of the nuclear pore complex, a complex required for the trafficking across the nuclear membrane. The chain is Nucleoporin p58/p45 from Homo sapiens (Human).